Here is an 807-residue protein sequence, read N- to C-terminus: Oxysterol-binding protein 1 (807 aa).

The residue at position 2 (A2) is an N-acetylalanine. The disordered stretch occupies residues 61–86 (GAGGVAAAGPAPAPPTGGSGGSGAGG). The segment covering 77–86 (GGSGGSGAGG) has biased composition (gly residues). The region spanning 88–181 (GSAREGWLFK…WVTALELAKA (94 aa)) is the PH domain. Residue 117–122 (LSYYRS) participates in a 1,2-diacyl-sn-glycero-3-phospho-(1D-myo-inositol 4-phosphate) binding. A phosphoserine mark is found at S190, S193, S198, S238, and S240. The stretch at 291–326 (QKSLQYERDQRIRLEETLEQLAKQHNHLERAFRGAT) forms a coiled coil. A 20-hydroxycholesterol-binding site is contributed by Q314. Q314 provides a ligand contact to 25-hydroxycholesterol. Q314 is a binding site for 7beta-hydroxycholesterol. Cholesterol is bound at residue Q314. Residue Q314 participates in ergosterol binding. The disordered stretch occupies residues 329 to 353 (PANTPGNVGSGKDQCCSGKGDMSDE). Phosphoserine is present on residues S338, S345, and S351. The short motif at 358 to 364 (EFFDAPE) is the FFAT element. Position 377 is a phosphothreonine (T377). S379, S382, S385, S386, and S389 each carry phosphoserine. Residues 493–496 (KPFN) and 522–523 (HH) each bind a 1,2-diacyl-sn-glycero-3-phospho-(1D-myo-inositol 4-phosphate). A disordered region spans residues 710-759 (TAPTDSRLRPDQRLMENGRWDEANAEKQRLEEKQRLSRKKREAEAMKATE). Positions 715 to 759 (SRLRPDQRLMENGRWDEANAEKQRLEEKQRLSRKKREAEAMKATE) are enriched in basic and acidic residues. Positions 730–760 (DEANAEKQRLEEKQRLSRKKREAEAMKATED) form a coiled coil.

The protein belongs to the OSBP family. Homodimer or homotrimer. Interacts (via FFAT motif) with VAPA. Interacts (via C-terminus) with RELCH (via the third HEAT repeat). Found in a complex composed of RELCH, OSBP1 and RAB11A. Widely expressed.

It is found in the cytoplasm. The protein resides in the cytosol. Its subcellular location is the perinuclear region. The protein localises to the golgi apparatus membrane. It localises to the endoplasmic reticulum membrane. It is found in the golgi apparatus. The protein resides in the trans-Golgi network. In terms of biological role, lipid transporter involved in lipid countertransport between the Golgi complex and membranes of the endoplasmic reticulum: specifically exchanges sterol with phosphatidylinositol 4-phosphate (PI4P), delivering sterol to the Golgi in exchange for PI4P, which is degraded by the SAC1/SACM1L phosphatase in the endoplasmic reticulum. Binds cholesterol and a range of oxysterols including 25-hydroxycholesterol. Cholesterol binding promotes the formation of a complex with PP2A and a tyrosine phosphatase which dephosphorylates ERK1/2, whereas 25-hydroxycholesterol causes its disassembly. Regulates cholesterol efflux by decreasing ABCA1 stability. This is Oxysterol-binding protein 1 from Homo sapiens (Human).